The chain runs to 348 residues: Photosystem II protein D1 (348 aa).

The next 3 membrane-spanning stretches (helical) occupy residues 33–50 (YIGW…LATV), 122–137 (HFIF…EWEF), and 146–160 (WIFV…AASA). A chlorophyll a-binding site is contributed by histidine 122. Tyrosine 130 contacts pheophytin a. 2 residues coordinate [CaMn4O5] cluster: aspartate 174 and glutamate 193. A helical transmembrane segment spans residues 201-222 (FHILGVAAVFGGSLFSAMHGSL). Residue histidine 202 participates in chlorophyll a binding. Residues histidine 219 and 268-269 (SF) contribute to the a quinone site. Histidine 219 is a Fe cation binding site. A Fe cation-binding site is contributed by histidine 276. A helical membrane pass occupies residues 278-292 (FLAAWPVIGIWFTSL). [CaMn4O5] cluster contacts are provided by histidine 336, glutamate 337, aspartate 346, and alanine 348.

It belongs to the reaction center PufL/M/PsbA/D family. PSII is composed of 1 copy each of membrane proteins PsbA, PsbB, PsbC, PsbD, PsbE, PsbF, PsbH, PsbI, PsbJ, PsbK, PsbL, PsbM, PsbT, PsbX, PsbY, PsbZ, Psb30/Ycf12, at least 3 peripheral proteins of the oxygen-evolving complex and a large number of cofactors. It forms dimeric complexes. The D1/D2 heterodimer binds P680, chlorophylls that are the primary electron donor of PSII, and subsequent electron acceptors. It shares a non-heme iron and each subunit binds pheophytin, quinone, additional chlorophylls, carotenoids and lipids. D1 provides most of the ligands for the Mn4-Ca-O5 cluster of the oxygen-evolving complex (OEC). There is also a Cl(-1) ion associated with D1 and D2, which is required for oxygen evolution. The PSII complex binds additional chlorophylls, carotenoids and specific lipids. serves as cofactor. Post-translationally, tyr-165 forms a radical intermediate that is referred to as redox-active TyrZ, YZ or Y-Z.

It is found in the plastid. The protein resides in the chloroplast thylakoid membrane. It carries out the reaction 2 a plastoquinone + 4 hnu + 2 H2O = 2 a plastoquinol + O2. In terms of biological role, photosystem II (PSII) is a light-driven water:plastoquinone oxidoreductase that uses light energy to abstract electrons from H(2)O, generating O(2) and a proton gradient subsequently used for ATP formation. It consists of a core antenna complex that captures photons, and an electron transfer chain that converts photonic excitation into a charge separation. The D1/D2 (PsbA/PsbD) reaction center heterodimer binds P680, the primary electron donor of PSII as well as several subsequent electron acceptors. The chain is Photosystem II protein D1 from Heterocapsa triquetra (Dinoflagellate).